We begin with the raw amino-acid sequence, 274 residues long: Thiamine kinase (274 aa).

Belongs to the thiamine kinase family.

The enzyme catalyses thiamine + ATP = thiamine phosphate + ADP + H(+). Its pathway is cofactor biosynthesis; thiamine diphosphate biosynthesis; thiamine phosphate from thiamine: step 1/1. Its function is as follows. Catalyzes the ATP-dependent phosphorylation of thiamine to thiamine phosphate. Is involved in thiamine salvage. The chain is Thiamine kinase from Shigella sonnei (strain Ss046).